An 876-amino-acid chain; its full sequence is Alanine--tRNA ligase (876 aa).

At K74 the chain carries N6-acetyllysine. Residues H564, H568, C666, and H670 each contribute to the Zn(2+) site.

It belongs to the class-II aminoacyl-tRNA synthetase family. Homotetramer. The cofactor is Zn(2+).

It is found in the cytoplasm. The enzyme catalyses tRNA(Ala) + L-alanine + ATP = L-alanyl-tRNA(Ala) + AMP + diphosphate. Functionally, catalyzes the attachment of alanine to tRNA(Ala) in a two-step reaction: alanine is first activated by ATP to form Ala-AMP and then transferred to the acceptor end of tRNA(Ala). Also edits incorrectly charged Ser-tRNA(Ala) and Gly-tRNA(Ala) via its editing domain. The chain is Alanine--tRNA ligase from Shigella sonnei (strain Ss046).